We begin with the raw amino-acid sequence, 184 residues long: Photosystem I assembly protein Ycf4 (184 aa).

2 consecutive transmembrane segments (helical) span residues Ile19–Gly39 and Ile57–Ser77.

Belongs to the Ycf4 family.

It localises to the plastid. It is found in the chloroplast thylakoid membrane. In terms of biological role, seems to be required for the assembly of the photosystem I complex. The sequence is that of Photosystem I assembly protein Ycf4 from Atropa belladonna (Belladonna).